The primary structure comprises 376 residues: Lipoyl synthase 1, mitochondrial (376 aa).

The [4Fe-4S] cluster site is built by Cys-109, Cys-114, Cys-120, Cys-140, Cys-144, Cys-147, and Ser-356. The Radical SAM core domain maps to 125 to 345 (ETGTATATIM…QTLGMEMGFR (221 aa)).

It belongs to the radical SAM superfamily. Lipoyl synthase family. [4Fe-4S] cluster is required as a cofactor.

The protein localises to the mitochondrion. It catalyses the reaction [[Fe-S] cluster scaffold protein carrying a second [4Fe-4S](2+) cluster] + N(6)-octanoyl-L-lysyl-[protein] + 2 oxidized [2Fe-2S]-[ferredoxin] + 2 S-adenosyl-L-methionine + 4 H(+) = [[Fe-S] cluster scaffold protein] + N(6)-[(R)-dihydrolipoyl]-L-lysyl-[protein] + 4 Fe(3+) + 2 hydrogen sulfide + 2 5'-deoxyadenosine + 2 L-methionine + 2 reduced [2Fe-2S]-[ferredoxin]. The protein operates within protein modification; protein lipoylation via endogenous pathway; protein N(6)-(lipoyl)lysine from octanoyl-[acyl-carrier-protein]: step 2/2. Catalyzes the radical-mediated insertion of two sulfur atoms into the C-6 and C-8 positions of the octanoyl moiety bound to the lipoyl domains of lipoate-dependent enzymes, thereby converting the octanoylated domains into lipoylated derivatives. In Pisum sativum (Garden pea), this protein is Lipoyl synthase 1, mitochondrial.